Consider the following 901-residue polypeptide: Protein translocase subunit SecA (901 aa).

Residues Gln-87, 105–109 (GEGKT), and Asp-512 contribute to the ATP site. Residues Cys-885, Cys-887, Cys-896, and His-897 each coordinate Zn(2+).

Belongs to the SecA family. Monomer and homodimer. Part of the essential Sec protein translocation apparatus which comprises SecA, SecYEG and auxiliary proteins SecDF-YajC and YidC. It depends on Zn(2+) as a cofactor.

Its subcellular location is the cell inner membrane. The protein resides in the cytoplasm. The catalysed reaction is ATP + H2O + cellular proteinSide 1 = ADP + phosphate + cellular proteinSide 2.. Part of the Sec protein translocase complex. Interacts with the SecYEG preprotein conducting channel. Has a central role in coupling the hydrolysis of ATP to the transfer of proteins into and across the cell membrane, serving both as a receptor for the preprotein-SecB complex and as an ATP-driven molecular motor driving the stepwise translocation of polypeptide chains across the membrane. In Salmonella arizonae (strain ATCC BAA-731 / CDC346-86 / RSK2980), this protein is Protein translocase subunit SecA.